Here is a 94-residue protein sequence, read N- to C-terminus: Large ribosomal subunit protein bL25 (94 aa).

The protein belongs to the bacterial ribosomal protein bL25 family. As to quaternary structure, part of the 50S ribosomal subunit; part of the 5S rRNA/L5/L18/L25 subcomplex. Contacts the 5S rRNA. Binds to the 5S rRNA independently of L5 and L18.

This is one of the proteins that binds to the 5S RNA in the ribosome where it forms part of the central protuberance. The polypeptide is Large ribosomal subunit protein bL25 (Citrobacter koseri (strain ATCC BAA-895 / CDC 4225-83 / SGSC4696)).